We begin with the raw amino-acid sequence, 456 residues long: Tyrosine phenol-lyase (456 aa).

Lys257 carries the N6-(pyridoxal phosphate)lysine modification.

The protein belongs to the beta-eliminating lyase family. As to quaternary structure, homotetramer. It depends on pyridoxal 5'-phosphate as a cofactor.

The catalysed reaction is L-tyrosine + H2O = phenol + pyruvate + NH4(+). This is Tyrosine phenol-lyase (tpl) from Citrobacter intermedius (Escherichia intermedia).